A 93-amino-acid chain; its full sequence is Small integral membrane protein 36 (93 aa).

A helical membrane pass occupies residues Leu14–Leu34. The disordered stretch occupies residues Pro73 to Val93.

Its subcellular location is the membrane. The protein is Small integral membrane protein 36 of Homo sapiens (Human).